The primary structure comprises 102 residues: Large ribosomal subunit protein bL21 (102 aa).

This sequence belongs to the bacterial ribosomal protein bL21 family. Part of the 50S ribosomal subunit. Contacts protein L20.

Functionally, this protein binds to 23S rRNA in the presence of protein L20. This Bacillus pumilus (strain SAFR-032) protein is Large ribosomal subunit protein bL21.